A 550-amino-acid chain; its full sequence is Glycosyltransferase-like protein gnt12 (550 aa).

The disordered stretch occupies residues 1–29; it reads MSYLPLYNNNNNINNNNNNNNNRINNNKE. Over 1–36 the chain is Cytoplasmic; sequence MSYLPLYNNNNNINNNNNNNNNRINNNKEKGVKNKP. A compositionally biased stretch (low complexity) spans 8–25; it reads NNNNNINNNNNNNNNRIN. Residues 37-57 traverse the membrane as a helical; Signal-anchor for type II membrane protein segment; sequence FQIFISIVFIVFLCFFLIWSM. Residues 58-550 lie on the Extracellular side of the membrane; sequence EAKKDKNIKI…LFNEPLTNEC (493 aa). Residues 81–97 show a composition bias toward low complexity; the sequence is LINEPINNNKNNKNNIP. Positions 81 to 100 are disordered; the sequence is LINEPINNNKNNKNNIPKNH. Residues Asn233, Asn322, and Asn426 are each glycosylated (N-linked (GlcNAc...) asparagine).

Belongs to the glycosyltransferase 8 family. Highly divergent.

Its subcellular location is the membrane. In Dictyostelium discoideum (Social amoeba), this protein is Glycosyltransferase-like protein gnt12 (gnt12).